The primary structure comprises 336 residues: UPF0065 protein in tcbD-tcbE intergenic region (336 aa).

An N-terminal signal peptide occupies residues 1–32; it reads MHSSKCPDLANIGRRRVLAGIALAMTTSSTRA.

The protein belongs to the UPF0065 (bug) family.

It localises to the periplasm. The sequence is that of UPF0065 protein in tcbD-tcbE intergenic region from Pseudomonas sp. (strain P51).